We begin with the raw amino-acid sequence, 963 residues long: MADSDDEYDRKRRDKFRGERDSYRPERRDERRPMGGGANSRDEWSERNPFRGSSAAGGGGGGGARHRPDYSDYRGSGPRPRYGSPGREMPPAKRMRPDWGESEMRSNPRFGYDPYLVQAWNDHYQSLHSAYSHSSHPSSARESAPNVVNSDTQTQPAMLTLKQFLDTQDENISDSEVMRKYTEYKTDFKRQQLNEFFVAHKDEEWFKNKYHPEDSVRRSEEQRGFLKRRTDVFLELLENGTIGSVKVDSSQADSLVRVLDTCVIKLEGGTDEDLKILDEKPKETPVVYERKSESTEASVVAKREPESPKQTKSEKGADEEQPVVVSPQRKSLRPVNSDEENWDDENDEMAAPAKVQGDDDSIKSGSDKKLKKKKIKKRNRNSSDDESSSSSSFESDSDSDDEKLKAKYDVEEGLRADQKAEAQKDKEEAATVAKANPLPPDSPQPEGGTALQDAAAIKSEQSDEQQEKDAEQPAELQADEPAAAKNGEEPEKTEKNEVETKSTADDVTETIDLDKVKDGPQPRALHRTSSIFLRNLAPSITKAEIEAICTRFSGYLRVAIADPLVERRWYRRGWITFTRDVNIKEICWSLNNQRLRDCEMGAIVNRDLSRRVRPANGITAHKQIVRADIKLCAKIAMNLDERFKLWSEADSTQQQPDAESKPSADATNGSGGSSTTYGFNSKNPVLQNITDYLIEEASAEEEELLGLAGDNKDGEGEPIERDEQLISVLDRLVLYLRIVHSVDYYNHCEYPYEDEMPNRCGIIHARGPPPMRVTSNDVQEYIKAYDGKLQQFLTKSVQLSDDEIKELGAKNPETEVEKFVQANTQELAKDKWLCPLSGKKFKGPEFIRKHIFNKHEEKVDEVRKEVQYFNNYLRDPKRPQLPEHPGSSKRTESESGRGSGGYRPPMYPPFSAMPYGFAPPMMGGGGRGGRNFPPVRREMPLEHQRRLIGYHDLDAPVNSDMFD.

5 disordered regions span residues 1–108 (MADS…RSNP), 129–151 (SAYS…VNSD), 283–522 (ETPV…GPQP), 648–680 (EADS…YGFN), and 871–905 (NYLR…YRPP). 2 stretches are compositionally biased toward basic and acidic residues: residues 8–33 (YDRK…ERRP) and 40–49 (SRDEWSERNP). Residues 73–87 (YRGSGPRPRYGSPGR) are compositionally biased toward low complexity. Phosphotyrosine is present on Y82. Phosphoserine is present on S84. Positions 95–106 (MRPDWGESEMRS) are enriched in basic and acidic residues. The span at 129 to 144 (SAYSHSSHPSSARESA) shows a compositional bias: low complexity. Basic and acidic residues-rich tracts occupy residues 283–294 (ETPVVYERKSES) and 301–318 (AKRE…KGAD). Phosphoserine is present on residues S307, S337, and S361. Positions 337–348 (SDEENWDDENDE) are enriched in acidic residues. A compositionally biased stretch (basic and acidic residues) spans 356–368 (QGDDDSIKSGSDK). A compositionally biased stretch (basic residues) spans 369-380 (KLKKKKIKKRNR). Residues 402 to 429 (EKLKAKYDVEEGLRADQKAEAQKDKEEA) show a composition bias toward basic and acidic residues. A Phosphoserine modification is found at S442. Basic and acidic residues predominate over residues 486–504 (NGEEPEKTEKNEVETKSTA).

It belongs to the ARS2 family. Interacts with cbp20, Dcr-2 and pasha.

It is found in the nucleus. In terms of biological role, acts as a mediator between the cap-binding complex (CBC) and RNA-mediated gene silencing (RNAi). Involved in innate immunity via the short interfering RNAs (siRNAs) processing machinery by restricting the viral RNA production. Also involved microRNA (miRNA)-mediated silencing by contributing to the stability and delivery of primary miRNA transcripts to the primary miRNA processing complex containing drosha and pasha. This is Serrate RNA effector molecule homolog (Ars2) from Drosophila virilis (Fruit fly).